Reading from the N-terminus, the 229-residue chain is uncharacterized protein (229 aa).

Residues 1–17 (MKKIIALMLFLTFFAHA) form the signal peptide.

This is an uncharacterized protein from Escherichia coli O157:H7.